Reading from the N-terminus, the 219-residue chain is Small ribosomal subunit protein uS5 (219 aa).

Positions 1–21 (MTDQNQKANQGNGLQTTNLQA) are enriched in polar residues. A disordered region spans residues 1–61 (MTDQNQKANQ…NQNRRFQKPA (61 aa)). The span at 35–47 (GIKKAVSKKEGGG) shows a compositional bias: basic and acidic residues. Positions 66-129 (FEERIVKLKR…KAAHNSLHTI (64 aa)) constitute an S5 DRBM domain.

This sequence belongs to the universal ribosomal protein uS5 family. Part of the 30S ribosomal subunit. Contacts proteins S4 and S8.

In terms of biological role, with S4 and S12 plays an important role in translational accuracy. Functionally, located at the back of the 30S subunit body where it stabilizes the conformation of the head with respect to the body. The sequence is that of Small ribosomal subunit protein uS5 from Mycoplasma pneumoniae (strain ATCC 29342 / M129 / Subtype 1) (Mycoplasmoides pneumoniae).